We begin with the raw amino-acid sequence, 229 residues long: 7-cyano-7-deazaguanine synthase (229 aa).

9–19 (LSGGLDSATVL) contacts ATP. 4 residues coordinate Zn(2+): Cys-188, Cys-198, Cys-201, and Cys-204.

This sequence belongs to the QueC family. Requires Zn(2+) as cofactor.

The enzyme catalyses 7-carboxy-7-deazaguanine + NH4(+) + ATP = 7-cyano-7-deazaguanine + ADP + phosphate + H2O + H(+). It functions in the pathway purine metabolism; 7-cyano-7-deazaguanine biosynthesis. Catalyzes the ATP-dependent conversion of 7-carboxy-7-deazaguanine (CDG) to 7-cyano-7-deazaguanine (preQ(0)). The sequence is that of 7-cyano-7-deazaguanine synthase from Methylobacillus flagellatus (strain ATCC 51484 / DSM 6875 / VKM B-1610 / KT).